The sequence spans 405 residues: MSAAAKSQVPEEAAPGCEEEPKGKTLLTWGSLFGHRSEKIVFTKGDGSPEESLLTVTITETTVIESDLGVWSSRALIYLTLWFFFSFCTLFLNKYILSLLEGEPSMLGAVQMLSTTLIGCVKIFVPCCLYQHKTRLSYPPNFIMTMLFVGLMRFATVVLGLVSLKNVAVSFAETVKSSAPIFTVIMSRMILGEYTGLLVNLSLIPVMGGLALCTATEISFNILGFSAALSTNIMDCLQNVFSKKLLSGDKYRFSAPELQFYTSAAAVALLIPAWTFFMDIPVIGRSGKSFSYSQDIVLLLLTDGALFHLQSVTAYALMGKISPVTFSVASTVKHALSIWLSIIVFGNKITSLSAIGTILVTLGVLLYNKARQYQQETMQSLVTATSRNPEDDTEPLVPQDSRQHH.

The segment at methionine 1–lysine 22 is disordered. 10 helical membrane-spanning segments follow: residues leucine 76–isoleucine 96, methionine 106–proline 126, phenylalanine 142–valine 162, valine 167–serine 187, threonine 195–alanine 215, serine 219–phenylalanine 241, alanine 264–glycine 284, isoleucine 296–alanine 316, phenylalanine 326–glycine 346, and asparagine 347–tyrosine 367. The tract at residues serine 380–histidine 405 is disordered.

It belongs to the TPT transporter family. SLC35E subfamily.

Its subcellular location is the membrane. Putative transporter. The protein is Solute carrier family 35 member E2A (Slc35e2a) of Mus musculus (Mouse).